Consider the following 350-residue polypeptide: Kelch domain-containing protein 9 (350 aa).

3 Kelch repeats span residues 39–89 (RFYL…LVGG), 91–137 (WLCV…SHTC), and 325–350 (QLYL…EFFI).

As to quaternary structure, interacts with CCNA1.

In Mus musculus (Mouse), this protein is Kelch domain-containing protein 9 (Klhdc9).